Here is an 803-residue protein sequence, read N- to C-terminus: Leucine--tRNA ligase (803 aa).

The 'HIGH' region signature appears at 40–51 (PYPSGAGLHVGH). The 'KMSKS' region signature appears at 575-579 (KMSKS). Residue lysine 578 coordinates ATP.

This sequence belongs to the class-I aminoacyl-tRNA synthetase family.

The protein resides in the cytoplasm. It carries out the reaction tRNA(Leu) + L-leucine + ATP = L-leucyl-tRNA(Leu) + AMP + diphosphate. The protein is Leucine--tRNA ligase of Listeria welshimeri serovar 6b (strain ATCC 35897 / DSM 20650 / CCUG 15529 / CIP 8149 / NCTC 11857 / SLCC 5334 / V8).